The chain runs to 568 residues: Protein yellow (568 aa).

Residues 1-28 (MHAQDKGGVLPGLSLLLIAVAMVCPSQA) form the signal peptide. 2 N-linked (GlcNAc...) asparagine glycosylation sites follow: asparagine 151 and asparagine 222.

The protein belongs to the major royal jelly protein family.

The protein localises to the secreted. In terms of biological role, controls the pigmentation pattern of the adult cuticle and larval mouth parts. This Drosophila guanche (Fruit fly) protein is Protein yellow (y).